The chain runs to 146 residues: Hemoglobin subunit delta (146 aa).

The Globin domain maps to 2 to 146 (HLTGDEKSAV…VATALAHKYH (145 aa)). At Ser50 the chain carries Phosphoserine. Heme b is bound by residues His63 and His92.

Belongs to the globin family. As to quaternary structure, heterotetramer of two delta chains and two alpha chains. As to expression, red blood cells.

In Aotus trivirgatus (Three-striped night monkey), this protein is Hemoglobin subunit delta (HBD).